Here is a 374-residue protein sequence, read N- to C-terminus: MPRPIQATIHTAALRHNLARARLAAPDAKVWAIVKANAYGHGIERVFEGLRAADGFALLDLDEAQRVRALGWRGPILLLEGVFELRDLELCSRLDLWHTVHCDEQIDMLASHKTKVAQRVFLKMNSGMNRLGFTPQRYRAAWTRLNALPQVDEISLITHFSDADGARGITEQMAVFAEVTRDLPGERTLSNSAATLLHTPARQPGDGFVASDWVRPGIAIYGSAPDFPQHSATDWGLQPSMTLTAKIIATQTVDTGASVGYGSTFVADKPIQVGVVACGYADGYPRLCPTGTPVLVNGIRTRTVGRVSMDMLAVDLSAVTAAGGQVGIGSEVTLWGRAANGLVLGIDEVAQPAGTVGYELMCALAPRVPVLVAD.

The active-site Proton acceptor; specific for D-alanine is the K35. Residue K35 is modified to N6-(pyridoxal phosphate)lysine. R130 contributes to the substrate binding site. The Proton acceptor; specific for L-alanine role is filled by Y261. M309 serves as a coordination point for substrate.

This sequence belongs to the alanine racemase family. The cofactor is pyridoxal 5'-phosphate.

It catalyses the reaction L-alanine = D-alanine. The protein operates within amino-acid biosynthesis; D-alanine biosynthesis; D-alanine from L-alanine: step 1/1. Catalyzes the interconversion of L-alanine and D-alanine. May also act on other amino acids. In Albidiferax ferrireducens (strain ATCC BAA-621 / DSM 15236 / T118) (Rhodoferax ferrireducens), this protein is Alanine racemase (alr).